Reading from the N-terminus, the 314-residue chain is Olfactory receptor 1C1 (314 aa).

Residues 1–25 (MEKRNLTVVREFVLLGLPSSAEQQH) are Extracellular-facing. A helical transmembrane segment spans residues 26–49 (LLSVLFLCMYLATTLGNMLIIATI). Residues 50 to 57 (GFDSHLHS) are Cytoplasmic-facing. The helical transmembrane segment at 58–79 (PMYFFLSNLAFVDICFTSTTVP) threads the bilayer. The Extracellular segment spans residues 80-100 (QMVVNILTGTKTISFAGCLTQ). Cysteine 97 and cysteine 189 are oxidised to a cystine. The chain crosses the membrane as a helical span at residues 101 to 120 (LFFFVSFVNMDSLLLCVMAY). The Cytoplasmic portion of the chain corresponds to 121–139 (DRYVAICHPLHYTARMNLC). The chain crosses the membrane as a helical span at residues 140–158 (LCVQLVAGLWLVTYLHALL). Topologically, residues 159–195 (HTVLIAQLSFCASNIIHHFFCDLNPLLQLSCSDVSFN) are extracellular. The chain crosses the membrane as a helical span at residues 196 to 219 (VMIIFAVGGLLALTPLVCILVSYG). Over 220 to 236 (LIFSTVLKITSTQGKQR) the chain is Cytoplasmic. A helical membrane pass occupies residues 237 to 259 (AVSTCSCHLSVVVLFYGTAIAVY). At 260–272 (FSPSSPHMPESDT) the chain is on the extracellular side. A helical transmembrane segment spans residues 273–292 (LSTIMYSMVAPMLNPFIYTL). Residues 293-314 (RNRDMKRGLQKMLLKCTVFQQQ) lie on the Cytoplasmic side of the membrane.

Belongs to the G-protein coupled receptor 1 family.

It localises to the cell membrane. Its function is as follows. Odorant receptor. The protein is Olfactory receptor 1C1 (OR1C1) of Homo sapiens (Human).